Consider the following 181-residue polypeptide: Large ribosomal subunit protein uL5 (181 aa).

The protein belongs to the universal ribosomal protein uL5 family. In terms of assembly, part of the 50S ribosomal subunit; part of the 5S rRNA/L5/L18/L25 subcomplex. Contacts the 5S rRNA and the P site tRNA. Forms a bridge to the 30S subunit in the 70S ribosome.

In terms of biological role, this is one of the proteins that bind and probably mediate the attachment of the 5S RNA into the large ribosomal subunit, where it forms part of the central protuberance. In the 70S ribosome it contacts protein S13 of the 30S subunit (bridge B1b), connecting the 2 subunits; this bridge is implicated in subunit movement. Contacts the P site tRNA; the 5S rRNA and some of its associated proteins might help stabilize positioning of ribosome-bound tRNAs. In Rickettsia canadensis (strain McKiel), this protein is Large ribosomal subunit protein uL5.